The chain runs to 227 residues: Enolase-phosphatase E1 (227 aa).

Positions 12 and 14 each coordinate Mg(2+). Substrate is bound by residues 118-119 (SS) and lysine 159. Aspartate 186 lines the Mg(2+) pocket.

The protein belongs to the HAD-like hydrolase superfamily. MasA/MtnC family. In terms of assembly, monomer. Mg(2+) serves as cofactor.

Its subcellular location is the cytoplasm. The protein resides in the nucleus. It carries out the reaction 5-methylsulfanyl-2,3-dioxopentyl phosphate + H2O = 1,2-dihydroxy-5-(methylsulfanyl)pent-1-en-3-one + phosphate. It participates in amino-acid biosynthesis; L-methionine biosynthesis via salvage pathway; L-methionine from S-methyl-5-thio-alpha-D-ribose 1-phosphate: step 3/6. Its pathway is amino-acid biosynthesis; L-methionine biosynthesis via salvage pathway; L-methionine from S-methyl-5-thio-alpha-D-ribose 1-phosphate: step 4/6. Bifunctional enzyme that catalyzes the enolization of 2,3-diketo-5-methylthiopentyl-1-phosphate (DK-MTP-1-P) into the intermediate 2-hydroxy-3-keto-5-methylthiopentenyl-1-phosphate (HK-MTPenyl-1-P), which is then dephosphorylated to form the acireductone 1,2-dihydroxy-3-keto-5-methylthiopentene (DHK-MTPene). The chain is Enolase-phosphatase E1 from Vanderwaltozyma polyspora (strain ATCC 22028 / DSM 70294 / BCRC 21397 / CBS 2163 / NBRC 10782 / NRRL Y-8283 / UCD 57-17) (Kluyveromyces polysporus).